The sequence spans 147 residues: Hordoindoline-B2 (147 aa).

The first 19 residues, 1–19 (MKTLFLLALLALVASTTSA), serve as a signal peptide directing secretion. A propeptide spanning residues 20–28 (QYSVGGGYN) is cleaved from the precursor.

Five disulfide bonds are present. Found in endosperm and aleurone layer of developing kernels, but not in the embryo.

The protein localises to the membrane. Its subcellular location is the secreted. It is found in the extracellular space. Its function is as follows. Acts as a membranotoxin, probably through its antibacterial and antifungal activities, contributing to the defense mechanism of the plant against predators. Forms monovalent cation-selective ion channels in membranes. Contributes to grain texture and hardness. The protein is Hordoindoline-B2 (HINB-2) of Hordeum vulgare (Barley).